The chain runs to 1150 residues: ATP-dependent helicase/deoxyribonuclease subunit B (1150 aa).

8–15 serves as a coordination point for ATP; that stretch reads GRAGSGKS. [4Fe-4S] cluster contacts are provided by Cys789, Cys1109, Cys1112, and Cys1118.

Belongs to the helicase family. AddB/RexB type 1 subfamily. Heterodimer of AddA and AddB. Mg(2+) is required as a cofactor. The cofactor is [4Fe-4S] cluster.

Its function is as follows. The heterodimer acts as both an ATP-dependent DNA helicase and an ATP-dependent, dual-direction single-stranded exonuclease. Recognizes the chi site generating a DNA molecule suitable for the initiation of homologous recombination. The AddB subunit has 5' -&gt; 3' nuclease activity but not helicase activity. The protein is ATP-dependent helicase/deoxyribonuclease subunit B of Clostridium kluyveri (strain NBRC 12016).